A 612-amino-acid chain; its full sequence is 2-isopropylmalate synthase B (612 aa).

Residues 71-344 (VRIFDTTLRD…YTGINTQHIL (274 aa)) form the Pyruvate carboxyltransferase domain. A divalent metal cation is bound by residues aspartate 80, histidine 277, and asparagine 313.

This sequence belongs to the alpha-IPM synthase/homocitrate synthase family. LeuA type 1 subfamily. In terms of assembly, homodimer. It depends on a divalent metal cation as a cofactor.

The enzyme catalyses 3-methyl-2-oxobutanoate + acetyl-CoA + H2O = (2S)-2-isopropylmalate + CoA + H(+). It functions in the pathway amino-acid biosynthesis; L-leucine biosynthesis; L-leucine from 3-methyl-2-oxobutanoate: step 1/4. In terms of biological role, catalyzes the condensation of the acetyl group of acetyl-CoA with 3-methyl-2-oxobutanoate (2-oxoisovalerate) to form 3-carboxy-3-hydroxy-4-methylpentanoate (2-isopropylmalate). In Solanum pennellii (Tomato), this protein is 2-isopropylmalate synthase B (IPMSB).